The chain runs to 571 residues: Urease subunit alpha (571 aa).

Positions 129 to 571 (GGIDSHIHFI…LPMAQRYFLF (443 aa)) constitute a Urease domain. Ni(2+)-binding residues include His134, His136, and Lys217. N6-carboxylysine is present on Lys217. His219 contacts substrate. Residues His246 and His272 each coordinate Ni(2+). Residue His320 is the Proton donor of the active site. Residue Asp360 coordinates Ni(2+).

Belongs to the metallo-dependent hydrolases superfamily. Urease alpha subunit family. In terms of assembly, heterotrimer of UreA (gamma), UreB (beta) and UreC (alpha) subunits. Three heterotrimers associate to form the active enzyme. Requires Ni cation as cofactor. Carboxylation allows a single lysine to coordinate two nickel ions.

Its subcellular location is the cytoplasm. The catalysed reaction is urea + 2 H2O + H(+) = hydrogencarbonate + 2 NH4(+). The protein operates within nitrogen metabolism; urea degradation; CO(2) and NH(3) from urea (urease route): step 1/1. The polypeptide is Urease subunit alpha (Cupriavidus necator (strain ATCC 17699 / DSM 428 / KCTC 22496 / NCIMB 10442 / H16 / Stanier 337) (Ralstonia eutropha)).